A 328-amino-acid chain; its full sequence is Ketol-acid reductoisomerase (NADP(+)) (328 aa).

Positions 1–179 (MRVLYERDGD…GGGAAGIIET (179 aa)) constitute a KARI N-terminal Rossmann domain. NADP(+) contacts are provided by residues 24–27 (YGSQ), Arg-47, and Ser-51. His-106 is a catalytic residue. Position 132 (Gly-132) interacts with NADP(+). In terms of domain architecture, KARI C-terminal knotted spans 180-325 (TFVDETETDL…ARLRSRMTCA (146 aa)). The Mg(2+) site is built by Asp-188, Glu-192, Glu-224, and Glu-228. Ser-249 contributes to the substrate binding site.

Belongs to the ketol-acid reductoisomerase family. It depends on Mg(2+) as a cofactor.

The enzyme catalyses (2R)-2,3-dihydroxy-3-methylbutanoate + NADP(+) = (2S)-2-acetolactate + NADPH + H(+). The catalysed reaction is (2R,3R)-2,3-dihydroxy-3-methylpentanoate + NADP(+) = (S)-2-ethyl-2-hydroxy-3-oxobutanoate + NADPH + H(+). It functions in the pathway amino-acid biosynthesis; L-isoleucine biosynthesis; L-isoleucine from 2-oxobutanoate: step 2/4. Its pathway is amino-acid biosynthesis; L-valine biosynthesis; L-valine from pyruvate: step 2/4. Its function is as follows. Involved in the biosynthesis of branched-chain amino acids (BCAA). Catalyzes an alkyl-migration followed by a ketol-acid reduction of (S)-2-acetolactate (S2AL) to yield (R)-2,3-dihydroxy-isovalerate. In the isomerase reaction, S2AL is rearranged via a Mg-dependent methyl migration to produce 3-hydroxy-3-methyl-2-ketobutyrate (HMKB). In the reductase reaction, this 2-ketoacid undergoes a metal-dependent reduction by NADPH to yield (R)-2,3-dihydroxy-isovalerate. This chain is Ketol-acid reductoisomerase (NADP(+)), found in Tremblaya princeps.